The primary structure comprises 171 residues: Adenine phosphoribosyltransferase (171 aa).

It belongs to the purine/pyrimidine phosphoribosyltransferase family. In terms of assembly, homodimer.

It is found in the cytoplasm. It catalyses the reaction AMP + diphosphate = 5-phospho-alpha-D-ribose 1-diphosphate + adenine. Its pathway is purine metabolism; AMP biosynthesis via salvage pathway; AMP from adenine: step 1/1. Functionally, catalyzes a salvage reaction resulting in the formation of AMP, that is energically less costly than de novo synthesis. The sequence is that of Adenine phosphoribosyltransferase from Solidesulfovibrio magneticus (strain ATCC 700980 / DSM 13731 / RS-1) (Desulfovibrio magneticus).